The primary structure comprises 400 residues: Probable peptidoglycan glycosyltransferase FtsW (400 aa).

Helical transmembrane passes span 30–50 (LSVLALLGLGLVMVASASIGI), 65–84 (QAAYVVLGLAAASLAYRIRL), 92–112 (GLLLGFAYFLLILVLVPGVGV), 123–143 (LGLFNLQVSEVAKLLFTLYLA), 157–177 (FAGFLRPMLLLSGAALLLLME), 179–199 (DFGAAVVLMAIGLALLFLAGA), 201–221 (LWQFALLVGTVAAALAMLAIT), 247–267 (TQSLIAIGSGSWFGVGLGASV), 280–300 (FLFAVLAEELGLVGITVVVLL), 321–341 (LFGAYLAYGVGVWVSLQAFIN), and 356–376 (LPLMSYGGSSMLMTCAAVGLL).

This sequence belongs to the SEDS family. FtsW subfamily.

The protein localises to the cell inner membrane. The enzyme catalyses [GlcNAc-(1-&gt;4)-Mur2Ac(oyl-L-Ala-gamma-D-Glu-L-Lys-D-Ala-D-Ala)](n)-di-trans,octa-cis-undecaprenyl diphosphate + beta-D-GlcNAc-(1-&gt;4)-Mur2Ac(oyl-L-Ala-gamma-D-Glu-L-Lys-D-Ala-D-Ala)-di-trans,octa-cis-undecaprenyl diphosphate = [GlcNAc-(1-&gt;4)-Mur2Ac(oyl-L-Ala-gamma-D-Glu-L-Lys-D-Ala-D-Ala)](n+1)-di-trans,octa-cis-undecaprenyl diphosphate + di-trans,octa-cis-undecaprenyl diphosphate + H(+). Its pathway is cell wall biogenesis; peptidoglycan biosynthesis. Functionally, peptidoglycan polymerase that is essential for cell division. The protein is Probable peptidoglycan glycosyltransferase FtsW of Thioalkalivibrio sulfidiphilus (strain HL-EbGR7).